Reading from the N-terminus, the 209-residue chain is TVP38/TMEM64 family membrane protein slr0305 (209 aa).

The next 5 helical transmembrane spans lie at 15–35 (LGTW…VVFL), 39–59 (ILTL…YVFI), 110–130 (LSPV…NVSL), 134–154 (VIGS…GSLA), and 171–191 (LQWT…IYVT).

Belongs to the TVP38/TMEM64 family.

It is found in the cell membrane. The polypeptide is TVP38/TMEM64 family membrane protein slr0305 (Synechocystis sp. (strain ATCC 27184 / PCC 6803 / Kazusa)).